The sequence spans 407 residues: Arginine deiminase (407 aa).

Cys397 (amidino-cysteine intermediate) is an active-site residue.

Belongs to the arginine deiminase family.

The protein resides in the cytoplasm. The enzyme catalyses L-arginine + H2O = L-citrulline + NH4(+). Its pathway is amino-acid degradation; L-arginine degradation via ADI pathway; carbamoyl phosphate from L-arginine: step 1/2. The protein is Arginine deiminase (arcA) of Escherichia coli O6:H1 (strain CFT073 / ATCC 700928 / UPEC).